The sequence spans 259 residues: Protein unc-50 homolog (259 aa).

Position 1 is an N-acetylmethionine (Met-1). Topologically, residues 1 to 82 are cytoplasmic; that stretch reads MLPSTSLSSS…TKDQWARDDP (82 aa). At Ser-6 the chain carries Phosphoserine. The helical transmembrane segment at 83 to 103 threads the bilayer; that stretch reads AFLVLLSIWLCVSTIGFGFVL. At 104–112 the chain is on the lumenal side; the sequence is DMGFFETIK. A helical membrane pass occupies residues 113–133; it reads LLLWVVFIDCVGVGLLISTLM. At 134–163 the chain is on the cytoplasmic side; that stretch reads WFVSNKYLVKRQSRDYDVEWGYAFDVHLNA. A helical membrane pass occupies residues 164–184; that stretch reads FYPLLVILHFIQLFFINHVIL. The Lumenal segment spans residues 185-187; sequence TDT. Residues 188-208 form a helical membrane-spanning segment; it reads FIGYLVGNTLWLIAVGYYIYV. Over 209 to 222 the chain is Cytoplasmic; it reads TFLGYSALPFLKNT. The chain crosses the membrane as a helical span at residues 223-243; the sequence is VILLYPFAPLMVLYGLSLALG. The Lumenal portion of the chain corresponds to 244–259; sequence WNFTHTLCSFYKYRVK.

This sequence belongs to the unc-50 family. As to expression, highly expressed in periodontal ligament and bone marrow, but not in gingival fibroblasts.

Its subcellular location is the nucleus inner membrane. The protein resides in the golgi apparatus membrane. Its function is as follows. Involved in the cell surface expression of neuronal nicotinic receptors. Binds RNA. This is Protein unc-50 homolog (Unc50) from Mus musculus (Mouse).